We begin with the raw amino-acid sequence, 375 residues long: Platelet-derived growth factor receptor-like protein (375 aa).

The N-terminal stretch at 1–21 (MKIWLLLGLLLMHEALEDVTG) is a signal peptide. The disordered stretch occupies residues 20 to 64 (TGQHPPKNKRPKEPGENRIKPTNKKVKPKIPKIKDRDSADPTPKT). A compositionally biased stretch (basic residues) spans 40–50 (PTNKKVKPKIP). Residues 62–159 (PKTQSIMTQM…GYVCRRDEAK (98 aa)) form the Ig-like C2-type 1 domain. C96 and C143 are disulfide-bonded. N-linked (GlcNAc...) asparagine glycosylation is found at N132 and N219. The region spanning 272–373 (PSTTILASSN…GQTTVATTVE (102 aa)) is the Ig-like C2-type 2 domain. A disulfide bridge links C293 with C357.

Forms a complex composed of PDGFRL, TNK2 and GRB2.

The protein localises to the secreted. This is Platelet-derived growth factor receptor-like protein (PDGFRL) from Bos taurus (Bovine).